The primary structure comprises 845 residues: Matrin-3 (845 aa).

Serine 2 is modified (N-acetylserine). Lysine 3 bears the N6-acetyllysine; alternate mark. A Glycyl lysine isopeptide (Lys-Gly) (interchain with G-Cter in SUMO2); alternate cross-link involves residue lysine 3. Serine 4, serine 9, serine 14, serine 22, serine 41, serine 118, and serine 126 each carry phosphoserine. Glycyl lysine isopeptide (Lys-Gly) (interchain with G-Cter in SUMO2) cross-links involve residues lysine 132 and lysine 146. 2 disordered regions span residues 147 to 174 (RRRT…YRVP) and 187 to 213 (DSFD…ESGY). Position 150 is a phosphothreonine (threonine 150). Phosphoserine is present on serine 157. Tyrosine 158 is modified (phosphotyrosine). The span at 160 to 174 (RDGRSATREPPYRVP) shows a compositional bias: basic and acidic residues. Serine 164, serine 188, and serine 195 each carry phosphoserine. Over residues 201-213 (DYDHGSRSQESGY) the composition is skewed to basic and acidic residues. Position 202 is a phosphotyrosine (tyrosine 202). Phosphoserine occurs at positions 206, 208, and 211. The residue at position 219 (tyrosine 219) is a Phosphotyrosine. Serine 234 is modified (phosphoserine). Lysine 245 is covalently cross-linked (Glycyl lysine isopeptide (Lys-Gly) (interchain with G-Cter in SUMO2)). Residue serine 264 is modified to Phosphoserine. Lysine 269 is covalently cross-linked (Glycyl lysine isopeptide (Lys-Gly) (interchain with G-Cter in SUMO2)). The residue at position 275 (serine 275) is a Phosphoserine. Residues 342 to 394 (PFMLQQSTNPAPGILGPPPPSFHLGGPAVGPRGNLGAGNGNLQGPRHMQKGRV) are disordered. Residues 398–473 (RVVHIMDFQR…KPVRVHLSQK (76 aa)) form the RRM 1 domain. Glycyl lysine isopeptide (Lys-Gly) (interchain with G-Cter in SUMO2) cross-links involve residues lysine 478, lysine 487, and lysine 491. Residues 496 to 571 (RVIHLSNLPH…RCVKVDLSEK (76 aa)) form the RRM 2 domain. Phosphoserine is present on residues serine 509 and serine 511. Lysine 515 participates in a covalent cross-link: Glycyl lysine isopeptide (Lys-Gly) (interchain with G-Cter in SUMO2). At lysine 522 the chain carries N6-acetyllysine; alternate. Residue lysine 522 forms a Glycyl lysine isopeptide (Lys-Gly) (interchain with G-Cter in SUMO2); alternate linkage. Phosphoserine is present on serine 533. Residues lysine 554 and lysine 555 each participate in a glycyl lysine isopeptide (Lys-Gly) (interchain with G-Cter in SUMO2) cross-link. Position 571 is an N6-acetyllysine (lysine 571). The interval 588-785 (KKDKSRKRSY…EYRIGPYQPN (198 aa)) is disordered. Residues serine 596, serine 598, serine 604, and serine 606 each carry the phosphoserine modification. Residues 600–643 (DGKESPSDKKSKTDGAQKTENPAEGKEQEEKSGEDGEKDTKDDQ) show a composition bias toward basic and acidic residues. Residues lysine 617 and lysine 630 each participate in a glycyl lysine isopeptide (Lys-Gly) (interchain with G-Cter in SUMO2) cross-link. Residues 653–665 (ESEDELLVDEEEA) show a composition bias toward acidic residues. Phosphoserine is present on residues serine 654, serine 671, serine 673, and serine 674. The residue at position 679 (threonine 679) is a Phosphothreonine. Serine 689 carries the post-translational modification Phosphoserine. Over residues 689-704 (SDGKKEPSDKAVKKDA) the composition is skewed to basic and acidic residues. Residues 708–716 (SKKKLKKVD) carry the Nuclear localization signal motif. Residues lysine 717 and lysine 734 each participate in a glycyl lysine isopeptide (Lys-Gly) (interchain with G-Cter in SUMO2) cross-link. Residue threonine 739 is modified to Phosphothreonine. Residues serine 745, serine 757, and serine 760 each carry the phosphoserine modification. Over residues 765 to 778 (DENKEDYTIPDEYR) the composition is skewed to basic and acidic residues. Lysine 768 is covalently cross-linked (Glycyl lysine isopeptide (Lys-Gly) (interchain with G-Cter in SUMO2)). The Matrin-type zinc finger occupies 799–830 (FYCKLCSLFYTNEEVAKNTHCSSLPHYQKLKK). N6-acetyllysine; alternate is present on lysine 834. Lysine 834 participates in a covalent cross-link: Glycyl lysine isopeptide (Lys-Gly) (interchain with G-Cter in SUMO2); alternate.

In terms of assembly, part of a complex consisting of SFPQ, NONO and MATR3. Interacts with AGO1 and AGO2. Part of a complex composed at least of ASH2L, EMSY, HCFC1, HSPA8, CCAR2, MATR3, MKI67, RBBP5, TUBB2A, WDR5 and ZNF335; this complex may have a histone H3-specific methyltransferase activity. Interacts with TARDBP. Part of the HDP-RNP complex composed of at least HEXIM1, PRKDC, XRCC5, XRCC6, paraspeckle proteins (SFPQ, NONO, PSPC1, RBM14, and MATR3) and NEAT1 RNA. Interacts with FUS. Interacts with IGF2BP1. Interacts with IGF2BP2 and IGF2BP3. Interacts with RBPMS.

Its subcellular location is the nucleus matrix. May play a role in transcription or may interact with other nuclear matrix proteins to form the internal fibrogranular network. In association with the SFPQ-NONO heteromer may play a role in nuclear retention of defective RNAs. Plays a role in the regulation of DNA virus-mediated innate immune response by assembling into the HDP-RNP complex, a complex that serves as a platform for IRF3 phosphorylation and subsequent innate immune response activation through the cGAS-STING pathway. Binds to N6-methyladenosine (m6A)-containing mRNAs and contributes to MYC stability by binding to m6A-containing MYC mRNAs. May bind to specific miRNA hairpins. The sequence is that of Matrin-3 (Matr3) from Rattus norvegicus (Rat).